The chain runs to 530 residues: Polyprotein pp62 (530 aa).

It belongs to the asfivirus polyprotein pp62 family. Monomer. Predominantly exists as a monomer, with very little dimers. Homodimerization seems to be linked to low pH. As to quaternary structure, homodimer; disulfide-linked. Homotrimer; disulfide-linked. Homohexamer. Monoubiquitinated in vitro by viral UBCv1. Post-translationally, specific enzymatic cleavages in vivo yield mature proteins.

Its subcellular location is the host cytoplasm. The protein resides in the host perinuclear region. The protein localises to the virion. Its function is as follows. Essential for the correct assembly and maturation of the core of the virion. Component of the core shell. Binds to phosphatidylserine, which may enable the core shell binding with the inner membrane. Functionally, component of the core shell. Binds to phosphatidylserine and DNA, which may link the core shell to the inner membrane and to the viral nucleoid. In terms of biological role, component of the core shell. This is Polyprotein pp62 from Ornithodoros (relapsing fever ticks).